The primary structure comprises 215 residues: Putative ribosome biogenesis protein slx9-like (215 aa).

Disordered regions lie at residues 49 to 121 (IIPS…GLGM), 133 to 157 (DSMK…MSLK), and 189 to 215 (LQNQ…LKRK).

Belongs to the SLX9 family.

It localises to the nucleus. The protein resides in the nucleolus. Involved in ribosome biogenesis. This is Putative ribosome biogenesis protein slx9-like from Dictyostelium discoideum (Social amoeba).